A 421-amino-acid polypeptide reads, in one-letter code: MTESVLDYMTRLGRAAREASRVIGRASTAQKNRALQATAAALDEARAELSAANALDLANGQANGLEPAMLERLALTPARIDSMIVGLRQVAGLADPVGAIRDMSYRPSGIQVGKMRVPLGVVGIIYESRPNVTIDAASLCLKSGNATILRGGSEAIHSNRAIAACIERGLAEARLPAAVVQVVETTDRAAVGALITMPEYVDVIVPRGGKGLIERVSRDARVPVIKHLDGICHVYVSAHADLAKAQKIAFNAKTYRYGICGAMETLLVDQTIAADFLPAMAAQFREKGVELRGCERTRDLIDVIPATEDDWHTEYLAAILSIRVVSGLDEAIEHINHYGSHHSDAIVSDHQSQIRRFMAEVDSSSVMVNAPTSFADGFEYGLGAEIGISTDKLHARGPVGLEGLTCEKYIVIGDGQLRGQA.

Belongs to the gamma-glutamyl phosphate reductase family.

The protein resides in the cytoplasm. The catalysed reaction is L-glutamate 5-semialdehyde + phosphate + NADP(+) = L-glutamyl 5-phosphate + NADPH + H(+). It participates in amino-acid biosynthesis; L-proline biosynthesis; L-glutamate 5-semialdehyde from L-glutamate: step 2/2. Functionally, catalyzes the NADPH-dependent reduction of L-glutamate 5-phosphate into L-glutamate 5-semialdehyde and phosphate. The product spontaneously undergoes cyclization to form 1-pyrroline-5-carboxylate. The polypeptide is Gamma-glutamyl phosphate reductase (Pseudomonas savastanoi pv. phaseolicola (strain 1448A / Race 6) (Pseudomonas syringae pv. phaseolicola (strain 1448A / Race 6))).